Consider the following 498-residue polypeptide: Fascin-3 (498 aa).

Belongs to the fascin family. As to expression, expressed in testis.

Its subcellular location is the cytoplasm. The protein localises to the cytoskeleton. Functionally, acts as an actin bundling protein. This is Fascin-3 (Fscn3) from Mus musculus (Mouse).